The following is a 384-amino-acid chain: Spermidine/putrescine import ATP-binding protein PotA (384 aa).

Positions 6–238 (IAFQNVSKVF…PINHFVATFI (233 aa)) constitute an ABC transporter domain. Residue 40–47 (GASGSGKS) coordinates ATP.

Belongs to the ABC transporter superfamily. Spermidine/putrescine importer (TC 3.A.1.11.1) family. In terms of assembly, the complex is composed of two ATP-binding proteins (PotA), two transmembrane proteins (PotB and PotC) and a solute-binding protein (PotD).

The protein resides in the cell membrane. It catalyses the reaction ATP + H2O + polyamine-[polyamine-binding protein]Side 1 = ADP + phosphate + polyamineSide 2 + [polyamine-binding protein]Side 1.. Part of the ABC transporter complex PotABCD involved in spermidine/putrescine import. Responsible for energy coupling to the transport system. In Streptococcus thermophilus (strain ATCC BAA-491 / LMD-9), this protein is Spermidine/putrescine import ATP-binding protein PotA.